The chain runs to 213 residues: Pyridoxine/pyridoxamine 5'-phosphate oxidase (213 aa).

Residues 8-11 (RREY) and K67 contribute to the substrate site. FMN-binding positions include 62–67 (RIVLLK), 77–78 (FT), R83, K84, and Q106. 3 residues coordinate substrate: Y124, R128, and S132. FMN contacts are provided by residues 141–142 (QS) and W186. Residue 192–194 (RLH) coordinates substrate. Residue R196 coordinates FMN.

It belongs to the pyridoxamine 5'-phosphate oxidase family. In terms of assembly, homodimer. FMN serves as cofactor.

It carries out the reaction pyridoxamine 5'-phosphate + O2 + H2O = pyridoxal 5'-phosphate + H2O2 + NH4(+). The enzyme catalyses pyridoxine 5'-phosphate + O2 = pyridoxal 5'-phosphate + H2O2. It functions in the pathway cofactor metabolism; pyridoxal 5'-phosphate salvage; pyridoxal 5'-phosphate from pyridoxamine 5'-phosphate: step 1/1. Its pathway is cofactor metabolism; pyridoxal 5'-phosphate salvage; pyridoxal 5'-phosphate from pyridoxine 5'-phosphate: step 1/1. Catalyzes the oxidation of either pyridoxine 5'-phosphate (PNP) or pyridoxamine 5'-phosphate (PMP) into pyridoxal 5'-phosphate (PLP). The sequence is that of Pyridoxine/pyridoxamine 5'-phosphate oxidase from Shewanella woodyi (strain ATCC 51908 / MS32).